A 4059-amino-acid chain; its full sequence is Fibrocystin (4059 aa).

Residues 1–18 (MMLAWLVSLLSMEVLLLA) form the signal peptide. Residues 19–3851 (KPYSSFQFEP…LPVASKERST (3833 aa)) lie on the Extracellular side of the membrane. Positions 25–109 (QFEPAEGSLA…AGPYSLEMRS (85 aa)) constitute an IPT/TIG 1; atypical domain. N-linked (GlcNAc...) asparagine glycosylation is found at asparagine 55 and asparagine 224. IPT/TIG domains are found at residues 135 to 230 (PVLY…FSVF) and 257 to 333 (PEIL…FEVG). The region spanning 323-483 (AGNRGLRFEV…TWLNPDVVNT (161 aa)) is the PA14 domain. Asparagine 355, asparagine 385, asparagine 518, asparagine 527, asparagine 620, asparagine 639, asparagine 709, asparagine 867, asparagine 965, asparagine 975, asparagine 1082, asparagine 1114, asparagine 1133, asparagine 1239, asparagine 1273, asparagine 1308, asparagine 1319, asparagine 1344, asparagine 1373, asparagine 1456, asparagine 1471, asparagine 1528, asparagine 1613, asparagine 1627, asparagine 1694, asparagine 1760, asparagine 1775, asparagine 1875, asparagine 1879, asparagine 1915, asparagine 1955, asparagine 2030, and asparagine 2139 each carry an N-linked (GlcNAc...) asparagine glycan. 2 IPT/TIG domains span residues 945-997 (LVHF…FMLV) and 1017-1100 (PRLD…AFTY). The 85-residue stretch at 1106-1190 (PVIVSLSRNR…IRSQGVDLYI (85 aa)) folds into the IPT/TIG 6; atypical domain. An IPT/TIG 7 domain is found at 1198–1266 (SVEPCSGSLL…RADVLTVLAS (69 aa)). Residues 1297–1378 (PVVTAMWGEF…MGFANMSVVP (82 aa)) enclose the IPT/TIG 8; atypical domain. Residues 1385–1466 (PQIIAIFPTH…ITVLVNGLTS (82 aa)) form the IPT/TIG 9 domain. 2 consecutive IPT/TIG domains span residues 1482-1566 (PIVD…RNFF) and 1569-1637 (PQVL…IDVN). An IPT/TIG 12; atypical domain is found at 1654–1738 (PELLSVSRSQ…VLRATVTSVT (85 aa)). Positions 1928-2049 (HSWFPQRVPH…PEVTVTYLQA (122 aa)) constitute a G8 1 domain. PbH1 repeat units follow at residues 2244–2266 (TWGLKVDSNVFYKIVGHALLLGS) and 2287–2321 (EQGSTIRNNVIISVSAAEGLSGSEMLAPAGIYTFS). N-linked (GlcNAc...) asparagine glycosylation is present at asparagine 2380. PbH1 repeat units lie at residues 2404–2426 (SNNLHLKNFQVYACRDFGIDILE) and 2459–2481 (RWELTISNTTFVNFDGNCVAIRT). 9 N-linked (GlcNAc...) asparagine glycosylation sites follow: asparagine 2466, asparagine 2503, asparagine 2529, asparagine 2547, asparagine 2581, asparagine 2589, asparagine 2627, asparagine 2747, and asparagine 2762. The G8 2 domain maps to 2741-2867 (KGWGGYNHTI…PKKSWVHLGA (127 aa)). PbH1 repeat units follow at residues 3004–3026 (SAGSWVISSTVHQSCSVGIHASS) and 3027–3049 (SHGVILTDNVVFGTNGHGIDVEG). Asparagine 3051 carries an N-linked (GlcNAc...) asparagine glycan. A PbH1 7 repeat occupies 3080–3102 (AEDIILHGNVVAGSERLGFHVGG). 2 N-linked (GlcNAc...) asparagine glycosylation sites follow: asparagine 3133 and asparagine 3162. A PbH1 8 repeat occupies 3188 to 3212 (TVQITLRNSVIVATSSSFDCIHDRK). 3 N-linked (GlcNAc...) asparagine glycosylation sites follow: asparagine 3218, asparagine 3719, and asparagine 3831. The chain crosses the membrane as a helical span at residues 3852-3872 (IILALSLCSVASWVALSCLVC). Positions 3869–3886 (CLVCCWFKKSKTRKIKPE) are ciliary targeting sequence (CST). The Cytoplasmic portion of the chain corresponds to 3873–4059 (CWFKKSKTRK…LHTAPPETIQ (187 aa)). Residues 3885–3898 (PEDISESQAKEQKK) are compositionally biased toward basic and acidic residues. The interval 3885–3915 (PEDISESQAKEQKKNTHNSSKPRGLQAKTAK) is disordered. The nuclear localization signal (NLS) stretch occupies residues 3946–3970 (KRKVSRLAVTEERTTTPAPKIPRIT). A disordered region spans residues 4015–4038 (QERKQGQEPSQLDKGSDCTGLSQE).

As to quaternary structure, interacts with CAMLG. Interacts with PKD2. Interacts (via CST) with ARF4; this interaction allows an efficient PKHD1 trafficking to the cilium. Interacts (via CST) with RAB8A; this interaction controls trafficking through the endomembrane systeme and to the cilium. Interacts (via CST) with TULP3; this interaction allows PKHD1 trafficking to the cilium. Post-translationally, palmitoylated. Palmitoylation facilitates the trafficking to the cilia and membrane targeting. N-glycosylated. In terms of processing, several proteolytic cleavages occur within the extracellular domain, whereas at least one cleavage occurs within the cytoplasmic domain. Cleaved by a probable proprotein convertase which produces an extracellular domain (polyductin extracellular domain, (PECD)) and a C-terminal fragment (polyductin transmembrane fragment (PTM)) which are tethered together by disulfide bonds. This extracellular domain (PECD) is then shed from the primary cilium by activation of a member of the ADAM metalloproteinase disintegrins family, resulting in concomitant release of an intra-cellular C-terminal fragment (ICD) via a gamma-secretase-dependent process. The proteolytic cleavage of the C-terminal intracellular fragment (ICD) is controlled by cytosolic calcium concentration and activation of PKC. As to expression, expressed in bile ducts and distal nephron segments but is absent from the proximal tubule. Expressed in pancreas and kidney but also in the liver. Expressed primarily in the distal tubule and thick ascending limb of the loop of Henle, and at low-level in the proximal tubule before renal development is complete at P0.

The protein localises to the cell membrane. It localises to the cytoplasm. The protein resides in the apical cell membrane. It is found in the cytoskeleton. Its subcellular location is the cilium basal body. The protein localises to the cell projection. It localises to the cilium. The protein resides in the spindle. It is found in the chromosome. Its subcellular location is the centromere. The protein localises to the nucleus. It localises to the secreted. The protein resides in the extracellular exosome. It is found in the endoplasmic reticulum. Its subcellular location is the golgi apparatus. Its function is as follows. Promotes ciliogenesis in renal epithelial cells and therefore participates in the tubules formation and/or ensures the maintenance of the architecture of the lumen of the kidney. Has an impact on cellular symmetry by ensuring correct bipolar cell division through the regulation of centrosome duplication and mitotic spindle assembly and by maintaining oriented cell division (OCD) during tubular elongation through planar cell polarity (PCP) pathway. During epithelial cell morphogenesis, it also regulates cell-cell and cell-matrix adhesion and participates in cell motility. Promotes cell-cell contact through the positive regulation of PTK2 kinase activity leading to either positive regulation of epithelial cell proliferation through the HRAS/RAF1 pathways, or negative regulation of apoptosis through the PDK1/AKT1 pathway. May act in collecting-duct and biliary differentiation. May participate in the regulation of the cholangiocytes proliferation and the CCN2 production in an CXCL8-dependent manner. The protein is Fibrocystin of Mus musculus (Mouse).